Reading from the N-terminus, the 465-residue chain is Deoxyguanosinetriphosphate triphosphohydrolase-like protein (465 aa).

A disordered region spans residues 1–22 (MKWDKLLNDKRRRESGVTRSKN). One can recognise an HD domain in the interval 63 to 252 (RLTHSMEVST…LEVADDIAYL (190 aa)).

The protein belongs to the dGTPase family. Type 3 subfamily.

This Listeria innocua serovar 6a (strain ATCC BAA-680 / CLIP 11262) protein is Deoxyguanosinetriphosphate triphosphohydrolase-like protein.